Consider the following 359-residue polypeptide: Molybdenum import ATP-binding protein ModC (359 aa).

One can recognise an ABC transporter domain in the interval 1-229; it reads MLELNFSQQL…SALRPWLQRE (229 aa). ATP is bound at residue 31 to 38; the sequence is GLSGAGKT. A Mop domain is found at 289 to 354; the sequence is SSSIRNILPV…IKSVSFNRQN (66 aa).

It belongs to the ABC transporter superfamily. Molybdate importer (TC 3.A.1.8) family. The complex is composed of two ATP-binding proteins (ModC), two transmembrane proteins (ModB) and a solute-binding protein (ModA).

It is found in the cell inner membrane. The enzyme catalyses molybdate(out) + ATP + H2O = molybdate(in) + ADP + phosphate + H(+). Functionally, part of the ABC transporter complex ModABC involved in molybdenum import. Responsible for energy coupling to the transport system. The sequence is that of Molybdenum import ATP-binding protein ModC from Yersinia pestis bv. Antiqua (strain Antiqua).